The sequence spans 1085 residues: MANSPDAAFSSPALLRSGSVYEPLKSINLPRPDNETLWDKLDHYYRIVKSTMLMYQSPTTGLFPTKTCGGEEKSKVHESLYCAAGAWALALAYRRIDDDKGRTHELEHSAIKCMRGILYCYMRQADKVQQFKQDPRPTTCLHSVFSVHTGDELLSYEEYGHLQINAVSLFLLYLVEMISSGLQIIYNTDEVSFIQNLVFCVERVYRVPDFGVWERGSKYNNGSTELHSSSVGLAKAALEAINGFNLFGNQGCSWSVIFVDLDAHNRNRQTLCSLLPRESRSHNTDAALLPCISYPAFALDDEALFSQTLDKVIRKLKGKYGFKRFLRDGYRTPLEDPNRRYYKPAEIKLFDGIECEFPIFFLYMMIDGVFRGNLEQVKEYQDLLTPLLHQTTEGYPVVPKYYYVPADFVECEKRNPGSQKRFPSNCGRDGKLFLWGQALYIIAKLLADELISPKDIDPVQRFVPLQNQRNVSMRYSNQGPLENDLVVHVALVAESQRLQVFLNTYGIQTQTPQQVEPIQIWPQQELVKAYFHLGINEKLGLSGRPDRPIGCLGTSKIYRILGKTVVCYPIIFDLSDFYMSQDVLLLIDDIKNALQFIKQYWKMHGRPLFLVLIREDNIRGSRFNPILDMLAAFKKGIIGGVKVHVDRLQTLISGAVVEQLDFLRISDTEKLPEFKSFEELEFPKHSKVKRQSSTADAPEAQHEPGITITEWKNKSTHEILQKLNDCGCLAGQTILLGILLKREGPNFITMEGTVSDHIERVYRRAGSKKLWSVVRRAASLLNKVVDSLAPSITNVLVQGKQVTLGAFGHEEEVISNPLSPRVIKNIIYYKCNTHDEREAVIQQELVIHIGWIISNSPELFSGMLKIRIGWIIHAMEYELQVRGGDKPAVDLYQLSPSEVKQLLLDILQPQQSGRCWLNRRQIDGSLNRTPPEFYDRVWQILERTPNGIVVAGKHLPQQPTLSDMTMYEMNFSLLVEDMLGNIDQPKYRQIIVELLMVVSIVLERNPELEFQDKVDLDRLVKEAFHEFQKDESRLKEIEKQDDMTSFYNTPPLGKRGTCSYLTKVVMNSLLEGEVKPSNEDSCLVS.

Residues S10, S19, and S693 each carry the phosphoserine modification. Calmodulin-binding stretches follow at residues 760–787 (RVYRRAGSKKLWSVVRRAASLLNKVVDS) and 912–943 (SGRCWLNRRQIDGSLNRTPPEFYDRVWQILER). A lipid anchor (S-farnesyl cysteine) is attached at C1082.

This sequence belongs to the phosphorylase b kinase regulatory chain family. Hexadecamer of 4 heterotetramers, each composed of alpha, beta, gamma, and delta subunits. Alpha (PHKA1 or PHKA2) and beta (PHKB) are regulatory subunits, gamma (PHKG1 or PHKG2) is the catalytic subunit, and delta is calmodulin. In terms of processing, although the final Cys may be farnesylated, the terminal tripeptide is probably not removed, and the C-terminus is not methylated.

It is found in the cell membrane. It functions in the pathway glycan biosynthesis; glycogen metabolism. Its activity is regulated as follows. By phosphorylation of various serine residues. Functionally, phosphorylase b kinase catalyzes the phosphorylation of serine in certain substrates, including troponin I. The beta chain acts as a regulatory unit and modulates the activity of the holoenzyme in response to phosphorylation. This Mus musculus (Mouse) protein is Phosphorylase b kinase regulatory subunit beta (Phkb).